A 283-amino-acid chain; its full sequence is 4-diphosphocytidyl-2-C-methyl-D-erythritol kinase (283 aa).

Residue K10 is part of the active site. 99–109 (PMGGGLGGGSS) lines the ATP pocket. The active site involves D141.

It belongs to the GHMP kinase family. IspE subfamily. Homodimer.

It catalyses the reaction 4-CDP-2-C-methyl-D-erythritol + ATP = 4-CDP-2-C-methyl-D-erythritol 2-phosphate + ADP + H(+). It participates in isoprenoid biosynthesis; isopentenyl diphosphate biosynthesis via DXP pathway; isopentenyl diphosphate from 1-deoxy-D-xylulose 5-phosphate: step 3/6. Catalyzes the phosphorylation of the position 2 hydroxy group of 4-diphosphocytidyl-2C-methyl-D-erythritol. The sequence is that of 4-diphosphocytidyl-2-C-methyl-D-erythritol kinase from Salmonella gallinarum (strain 287/91 / NCTC 13346).